A 428-amino-acid polypeptide reads, in one-letter code: 3-phosphoshikimate 1-carboxyvinyltransferase (428 aa).

Positions 20, 21, and 25 each coordinate 3-phosphoshikimate. A phosphoenolpyruvate-binding site is contributed by Lys-20. Positions 92 and 120 each coordinate phosphoenolpyruvate. 4 residues coordinate 3-phosphoshikimate: Ser-166, Gln-168, Asp-314, and Lys-341. Position 168 (Gln-168) interacts with phosphoenolpyruvate. Asp-314 (proton acceptor) is an active-site residue. Positions 345 and 387 each coordinate phosphoenolpyruvate.

It belongs to the EPSP synthase family. Monomer.

It localises to the cytoplasm. It catalyses the reaction 3-phosphoshikimate + phosphoenolpyruvate = 5-O-(1-carboxyvinyl)-3-phosphoshikimate + phosphate. It participates in metabolic intermediate biosynthesis; chorismate biosynthesis; chorismate from D-erythrose 4-phosphate and phosphoenolpyruvate: step 6/7. Catalyzes the transfer of the enolpyruvyl moiety of phosphoenolpyruvate (PEP) to the 5-hydroxyl of shikimate-3-phosphate (S3P) to produce enolpyruvyl shikimate-3-phosphate and inorganic phosphate. The chain is 3-phosphoshikimate 1-carboxyvinyltransferase from Listeria innocua serovar 6a (strain ATCC BAA-680 / CLIP 11262).